Reading from the N-terminus, the 221-residue chain is UPF0319 protein NTHI1987 (221 aa).

Residues 1–21 (MKLRAVVLGLATLCTSTATFA) form the signal peptide.

The protein belongs to the UPF0319 family.

This chain is UPF0319 protein NTHI1987, found in Haemophilus influenzae (strain 86-028NP).